The sequence spans 31 residues: Cytochrome b6-f complex subunit 6 (31 aa).

Residues 4–26 (IVSYFGFLLTASTITPALFIGLS) traverse the membrane as a helical segment.

The protein belongs to the PetL family. The 4 large subunits of the cytochrome b6-f complex are cytochrome b6, subunit IV (17 kDa polypeptide, PetD), cytochrome f and the Rieske protein, while the 4 small subunits are PetG, PetL, PetM and PetN. The complex functions as a dimer.

The protein localises to the plastid. Its subcellular location is the chloroplast thylakoid membrane. Component of the cytochrome b6-f complex, which mediates electron transfer between photosystem II (PSII) and photosystem I (PSI), cyclic electron flow around PSI, and state transitions. PetL is important for photoautotrophic growth as well as for electron transfer efficiency and stability of the cytochrome b6-f complex. This Nymphaea alba (White water-lily) protein is Cytochrome b6-f complex subunit 6.